A 618-amino-acid chain; its full sequence is Chaperone protein HtpG (618 aa).

Residues 1–340 (MATKHQFQTE…SEDLPLNVSR (340 aa)) form an a; substrate-binding region. The b stretch occupies residues 341–545 (EILQQNKILA…KEDNNPMMAN (205 aa)). Residues 546–618 (LMAQMGQKVP…ELNSLLLQSL (73 aa)) form a c region.

Belongs to the heat shock protein 90 family. Homodimer.

The protein localises to the cytoplasm. Functionally, molecular chaperone. Has ATPase activity. In Helicobacter hepaticus (strain ATCC 51449 / 3B1), this protein is Chaperone protein HtpG.